The sequence spans 129 residues: MAKEATRVRRRERKNISSGVVHINSTFNNTMITITDAQGNAIAWSSAGAQGFKGSRKSTPFAAQVAAEDCARKAQEHGMRSLEVEVCGPGSGRESALRALQSVGFIITSIRDVTPIPHNGCRPRKRRRV.

Belongs to the universal ribosomal protein uS11 family. Part of the 30S ribosomal subunit. Interacts with proteins S7 and S18. Binds to IF-3.

Located on the platform of the 30S subunit, it bridges several disparate RNA helices of the 16S rRNA. Forms part of the Shine-Dalgarno cleft in the 70S ribosome. The polypeptide is Small ribosomal subunit protein uS11 (Bartonella henselae (strain ATCC 49882 / DSM 28221 / CCUG 30454 / Houston 1) (Rochalimaea henselae)).